A 583-amino-acid chain; its full sequence is ATP-dependent lipid A-core flippase (583 aa).

Transmembrane regions (helical) follow at residues 18-38, 65-85, 105-127, 143-163, 167-187, 252-272, and 277-297; these read LWPI…TLII, IFMW…MSGF, LLFN…ATLM, GALI…IMMF, WQLS…IKLV, VFEP…LYIA, and VIEM…IALM. Positions 30–312 constitute an ABC transmembrane type-1 domain; sequence IIASITLIIN…LTNVSAQFQR (283 aa). An ABC transporter domain is found at 344-580; it reads IIFDNVTFFY…KGVYSQLYKF (237 aa). 378-385 provides a ligand contact to ATP; sequence GRSGSGKS.

This sequence belongs to the ABC transporter superfamily. Lipid exporter (TC 3.A.1.106) family. Homodimer.

The protein localises to the cell inner membrane. The enzyme catalyses ATP + H2O + lipid A-core oligosaccharideSide 1 = ADP + phosphate + lipid A-core oligosaccharideSide 2.. Functionally, involved in lipopolysaccharide (LPS) biosynthesis. Translocates lipid A-core from the inner to the outer leaflet of the inner membrane. Transmembrane domains (TMD) form a pore in the inner membrane and the ATP-binding domain (NBD) is responsible for energy generation. The chain is ATP-dependent lipid A-core flippase from Blochmanniella floridana.